The following is a 132-amino-acid chain: D-ribose pyranase (132 aa).

Residue H20 is the Proton donor of the active site. Substrate-binding positions include D28, H99, and 121 to 123 (YSN).

This sequence belongs to the RbsD / FucU family. RbsD subfamily. In terms of assembly, homodecamer.

Its subcellular location is the cytoplasm. It catalyses the reaction beta-D-ribopyranose = beta-D-ribofuranose. The protein operates within carbohydrate metabolism; D-ribose degradation; D-ribose 5-phosphate from beta-D-ribopyranose: step 1/2. Functionally, catalyzes the interconversion of beta-pyran and beta-furan forms of D-ribose. This Pseudomonas putida (strain ATCC 47054 / DSM 6125 / CFBP 8728 / NCIMB 11950 / KT2440) protein is D-ribose pyranase.